The chain runs to 442 residues: Proline--tRNA ligase (442 aa).

This sequence belongs to the class-II aminoacyl-tRNA synthetase family. ProS type 2 subfamily. As to quaternary structure, homodimer.

It is found in the cytoplasm. It carries out the reaction tRNA(Pro) + L-proline + ATP = L-prolyl-tRNA(Pro) + AMP + diphosphate. Catalyzes the attachment of proline to tRNA(Pro) in a two-step reaction: proline is first activated by ATP to form Pro-AMP and then transferred to the acceptor end of tRNA(Pro). The protein is Proline--tRNA ligase of Rhizobium meliloti (strain 1021) (Ensifer meliloti).